A 376-amino-acid chain; its full sequence is Delta(12) fatty acid desaturase fat-2 (376 aa).

A run of 4 helical transmembrane segments spans residues 45 to 65 (ISYL…VPYI), 69 to 89 (LGWI…SALF), 203 to 223 (VKCA…FVLC), and 228 to 248 (YTFV…LVII).

This sequence belongs to the fatty acid desaturase type 1 family.

It is found in the membrane. It catalyses the reaction (9Z)-octadecenoyl-CoA + 2 Fe(II)-[cytochrome b5] + O2 + 2 H(+) = (9Z,12Z)-octadecadienoyl-CoA + 2 Fe(III)-[cytochrome b5] + 2 H2O. The catalysed reaction is (9Z)-hexadecenoyl-CoA + 2 Fe(II)-[cytochrome b5] + O2 + 2 H(+) = (9Z,12Z)-hexadecadienoyl-CoA + 2 Fe(III)-[cytochrome b5] + 2 H2O. The enzyme catalyses (9Z,12Z)-octadecadienoyl-CoA + 2 Fe(II)-[cytochrome b5] + O2 + 2 H(+) = (9Z,12Z,15Z)-octadecatrienoyl-CoA + 2 Fe(III)-[cytochrome b5] + 2 H2O. It carries out the reaction (9Z)-heptadecenoyl-CoA + 2 Fe(II)-[cytochrome b5] + O2 + 2 H(+) = (9Z,12Z)-heptadecadienoyl-CoA + 2 Fe(III)-[cytochrome b5] + 2 H2O. It catalyses the reaction (9Z)-pentadecenoyl-CoA + 2 Fe(II)-[cytochrome b5] + O2 + 2 H(+) = (9Z,12Z)-pentadecadienoyl-CoA + 2 Fe(III)-[cytochrome b5] + 2 H2O. The catalysed reaction is (6Z,9Z,12Z)-octadecatrienoyl-CoA + 2 Fe(II)-[cytochrome b5] + O2 + 2 H(+) = (6Z,9Z,12Z,15Z)-octadecatetraenoyl-CoA + 2 Fe(III)-[cytochrome b5] + 2 H2O. The enzyme catalyses (9Z)-tetradecenoyl-CoA + 2 Fe(II)-[cytochrome b5] + O2 + 2 H(+) = (9Z,12Z)-tetradecadienoyl-CoA + 2 Fe(III)-[cytochrome b5] + 2 H2O. It functions in the pathway lipid metabolism; polyunsaturated fatty acid biosynthesis. Its function is as follows. Can function as a Delta(12)/Delta(15) bifunctional desaturase and behaves as a nu +3' desaturase. Introduces a double bond in the fatty acid chain three carbons away from an existing double bond to biosynthesize polyunsaturated fatty acids (PUFAs) endogenously (PUFAs are essential for membrane structure and many cellular and physiological processes). Acts on a number of substrates like oleoyl-CoA ((9Z)-octadecenoyl-CoA, 18:1n-9), palmitoleoyl-CoA ((9Z)-hexadecenoyl-CoA, 16:1n-7), and gamma-linolenoyl-CoA ((6Z,9Z,12Z)-octadecatrienoyl-CoA, 18:3n-6), to generate linoleoyl-CoA ((9Z,12Z)-octadecadienoyl-CoA, 18:2n-6), (9Z,12Z)-hexadecadienoyl-CoA (16:2n-4) and (6Z,9Z,12Z,15Z)-octadecatetraenoyl-CoA (18:4n-3) respectively. Unlike plants, Caenorhabditis elegans desaturases seem to use fatty acyl-CoAs as substrates. This chain is Delta(12) fatty acid desaturase fat-2 (fat-2), found in Caenorhabditis elegans.